The sequence spans 568 residues: Natural resistance-associated macrophage protein 2 (568 aa).

Residues 1 to 20 show a composition bias toward basic and acidic residues; that stretch reads MVLDPKEKMPDDGASGDHGD. The tract at residues 1–45 is disordered; the sequence is MVLDPKEKMPDDGASGDHGDSASLGAINPAYSNSSLPHSTGDSEE. Over 1-69 the chain is Cytoplasmic; that stretch reads MVLDPKEKMP…EEYSCFSFRK (69 aa). Over residues 30–40 the composition is skewed to polar residues; that stretch reads AYSNSSLPHST. Residues 70–90 traverse the membrane as a helical segment; the sequence is LWAFTGPGFLMSIAYLDPGNI. Topologically, residues 91 to 95 are extracellular; sequence ESDLQ. Residues 96–117 form a helical membrane-spanning segment; it reads SGAVAGFKLLWVLLLATIVGLL. Residues 118-154 are Cytoplasmic-facing; it reads LQRLAARLGVVTGLHLAEVCHRQYPKVPRIILWLMVE. A helical transmembrane segment spans residues 155–175; the sequence is LAIIGSDMQEVIGSAIAINLL. At 176-179 the chain is on the extracellular side; it reads SAGR. The helical transmembrane segment at 180–194 threads the bilayer; that stretch reads VPLWGGVLITIADTF. Residues 195–208 are Cytoplasmic-facing; that stretch reads VFLFLDKYGLRKLE. Residues 209–229 form a helical membrane-spanning segment; it reads AFFGFLITIMALTFGYEYITV. At 230–255 the chain is on the extracellular side; it reads KPSQSQVLRGMFVPSCPGCRTPQVEQ. The helical transmembrane segment at 256-276 threads the bilayer; that stretch reads AVGIVGAVIMPHNMYLHSALV. The Cytoplasmic segment spans residues 277–301; that stretch reads KSRQVNRANKQEVREANKYFFIESC. The chain crosses the membrane as a helical span at residues 302-322; the sequence is IALFVSFIINVFVVSVFAEAF. The Extracellular portion of the chain corresponds to 323–360; that stretch reads FEKTNKQVVEVCKNNSSPHADLFPSDNSTLAVDIYKGG. N336 and N349 each carry an N-linked (GlcNAc...) asparagine glycan. Residues 361 to 381 form a helical membrane-spanning segment; that stretch reads VVLGCYFGPAALYIWAVGILA. The Cytoplasmic portion of the chain corresponds to 382–408; it reads AGQSSTMTGTYSGQFVMEGFLNLKWSR. A helical membrane pass occupies residues 409-429; the sequence is FARVILTRSIAIIPTLLVAVF. Residues 430 to 440 lie on the Extracellular side of the membrane; it reads QDVEHLTGMND. Residues 441-461 traverse the membrane as a helical segment; that stretch reads FLNVLQSLQLPFALIPILTFT. The Cytoplasmic portion of the chain corresponds to 462-482; it reads SLRPVMSEFSNGIGWRIAGGI. Residues 483–503 form a helical membrane-spanning segment; sequence LVLIVCSINMYFVVVYVQELG. Topologically, residues 504–506 are extracellular; that stretch reads HVA. Residues 507–527 traverse the membrane as a helical segment; the sequence is LYVVAAVVSVAYLTFVFYLGW. The Cytoplasmic portion of the chain corresponds to 528–568; that stretch reads QCLIALGLSFLDCGRSYRLGLTAQPELYLLNTVDADSVVSR. The segment at 555–559 is required for early endosome targeting; it reads YLLNT. Phosphoserine occurs at positions 556, 564, and 567.

Belongs to the NRAMP family. As to quaternary structure, forms a complex with NDFIP1 and NEDD4L, in cortical neurons, in response to iron and cobalt exposure; this interaction leads to SLC11A2 ubiquitination by NEDD4L and proteasome-dependent degradation. Interacts with NDFIP1, NDFIP2 and WWP2; this interaction leads to SLC11A2 ubiquitination by WWP2 and subsequent proteasome-dependent degradation. Interacts with COX2 and TOM6 at the outer mitochondrion membrane. Interacts with ARRDC1; this interaction regulates the incorporation of SLC11A2 into extracellular vesicles through an ubiquitination-dependent mechanism. Interacts with ARRDC4; controls the incorporation of SLC11A2 into extracellular vesicles through an ubiquitination-dependent mechanism. In terms of processing, ubiquitinated by WWP2. Post-translationally, N-glycosylated. Abundantly expressed in erythroid precursor cells (at protein level). In terms of tissue distribution, expressed in duodenum (at protein level).

The protein resides in the golgi apparatus. The protein localises to the trans-Golgi network membrane. It is found in the early endosome membrane. It localises to the recycling endosome membrane. Its subcellular location is the cell membrane. The protein resides in the late endosome membrane. The protein localises to the lysosome membrane. It is found in the apical cell membrane. It localises to the mitochondrion outer membrane. Its subcellular location is the extracellular vesicle membrane. The enzyme catalyses Fe(2+)(in) + H(+)(in) = Fe(2+)(out) + H(+)(out). It catalyses the reaction Co(2+)(out) + H(+)(out) = Co(2+)(in) + H(+)(in). It carries out the reaction Cd(2+)(out) + H(+)(out) = Cd(2+)(in) + H(+)(in). The catalysed reaction is Mn(2+)(in) + H(+)(in) = Mn(2+)(out) + H(+)(out). The enzyme catalyses Zn(2+)(out) + H(+)(out) = Zn(2+)(in) + H(+)(in). It catalyses the reaction Ni(2+)(out) + H(+)(out) = Ni(2+)(in) + H(+)(in). It carries out the reaction H(+)(in) = H(+)(out). The catalysed reaction is Fe(2+)(in) = Fe(2+)(out). In terms of biological role, proton-coupled metal ion symporter operating with a proton to metal ion stoichiometry of 1:1. Selectively transports various divalent metal cations, in decreasing affinity: Cd(2+) &gt; Fe(2+) &gt; Co(2+), Mn(2+) &gt;&gt; Zn(2+), Ni(2+), VO(2+). Essential for maintenance of iron homeostasis by modulating intestinal absorption of dietary Fe(2+) and TF-associated endosomal Fe(2+) transport in erythroid precursors and other cells. Enables Fe(2+) and Mn(2+) ion entry into mitochondria, and is thus expected to promote mitochondrial heme synthesis, iron-sulfur cluster biogenesis and antioxidant defense. Can mediate uncoupled fluxes of either protons or metal ions. The protein is Natural resistance-associated macrophage protein 2 (Slc11a2) of Mus musculus (Mouse).